The following is a 2381-amino-acid chain: Myb-like protein U (2381 aa).

4 disordered regions span residues 1–85 (MKTK…TSNN), 148–167 (SSSG…GGIS), 178–492 (PTIP…NNNN), and 641–696 (NINN…GDEM). Low complexity-rich tracts occupy residues 30 to 41 (SKSSSKVSQSSS) and 64 to 79 (TIPA…PTLT). 3 stretches are compositionally biased toward low complexity: residues 192 to 204 (NLSS…NILS), 225 to 261 (ENVN…SSSS), and 291 to 315 (SNKS…NNKK). Acidic residues predominate over residues 331-343 (SEYDSSDSSDMDL). A compositionally biased stretch (low complexity) spans 363 to 405 (TTKPNNSNSNNNNNNNSINSTIPASNNINSANNSKTTNKNITS). Over residues 421–430 (SETPILTSVK) the composition is skewed to polar residues. 2 stretches are compositionally biased toward low complexity: residues 435 to 492 (QQIP…NNNN) and 641 to 692 (NINN…NNNN). The Myb-like domain occupies 856 to 899 (WHEEEKLLFRELFCAYGRDWQMVSTLMCGTKSPTQIKNFYYDVR). 10 disordered regions span residues 932-1024 (KPEQ…ETPP), 1068-1093 (INQS…NINP), 1145-1207 (TSST…SNQE), 1295-1339 (STTT…PPID), 1422-1474 (PYYP…LSTP), 1597-1647 (PPAT…TTIV), 1667-1849 (PIVK…PPPV), 1961-1985 (TTVP…NGLA), 2055-2106 (TSTV…NGLT), and 2122-2280 (LSGI…NKND). Low complexity predominate over residues 936–953 (NVNSNNNNNGGGNSLKDG). Residues 982-995 (VKKKSRTASKRSFR) show a composition bias toward basic residues. The segment covering 1000-1013 (ANETNRTPKNQPKP) has biased composition (polar residues). Composition is skewed to low complexity over residues 1069 to 1092 (NQSS…NNIN), 1145 to 1186 (TSST…TGSA), 1195 to 1205 (VNNNNNNNLSN), and 1306 to 1325 (TTTP…QLQQ). Pro residues predominate over residues 1326–1337 (LPPPPPPPPKPP). A compositionally biased stretch (low complexity) spans 1427 to 1474 (PSSTTTNSATSTPTSTPTSTPSTSASTLTPTSTPTSTPVPAPTSLSTP). The span at 1597–1606 (PPATITPILP) shows a compositional bias: pro residues. A compositionally biased stretch (low complexity) spans 1618-1637 (SSSSSSSSSSSSSSSSSSSS). Polar residues-rich tracts occupy residues 1638–1647 (TTKNNSTTIV) and 1671–1701 (QESN…KTLL). 2 stretches are compositionally biased toward low complexity: residues 1702 to 1735 (PSNS…NPSS) and 1743 to 1809 (TSNK…TLKP). Positions 1829–1844 (APTNSTNQNTIPNATT) are enriched in polar residues. 2 stretches are compositionally biased toward low complexity: residues 1961 to 1970 (TTVPGTTTTT) and 2065 to 2097 (NNMT…QQST). The segment covering 2129–2138 (NTLSGKSPTP) has biased composition (polar residues). Residues 2154 to 2209 (PSLSSSSANPISITNNTTSLSQQSNTTNTMPSTVSLSSGSTSINSNSSNSKSLRSP) show a composition bias toward low complexity. Positions 2210–2278 (KSSDNDGKES…NNNDKFDSNK (69 aa)) are enriched in basic and acidic residues.

This is Myb-like protein U (mybU) from Dictyostelium discoideum (Social amoeba).